A 681-amino-acid chain; its full sequence is Leucine-rich repeat, immunoglobulin-like domain and transmembrane domain-containing protein 3 (681 aa).

A signal peptide spans 1–19 (MWLSACLCLVLSFLGGVNG). Residue Asn-18 is glycosylated (N-linked (GlcNAc...) asparagine). At 20-584 (TCPSQCSCEY…RVEGRGSQWS (565 aa)) the chain is on the lumenal side. LRR repeat units follow at residues 56–79 (PVDT…AFYY), 80–103 (LVEL…SFYN), 104–128 (LRQL…LLDM), 129–151 (PHLR…AVRY), and 152–175 (LRNL…FLDS). The region spanning 254–344 (PSVMMSATKI…GISEAVVTVT (91 aa)) is the Ig-like domain. The cysteines at positions 275 and 328 are disulfide-linked. Asn-296 carries an N-linked (GlcNAc...) asparagine glycan. Disordered stretches follow at residues 350 to 391 (TTTL…GLTS) and 425 to 464 (TSVQ…KFPP). The span at 378–391 (TPPSKSWLSPGLTS) shows a compositional bias: polar residues. Residues Asn-485 and Asn-506 are each glycosylated (N-linked (GlcNAc...) asparagine). The chain crosses the membrane as a helical span at residues 585-605 (LLLVVTSTACVIVVPLICFLL). Residues 606 to 681 (YKVCKLQCTS…SDGCRTEYYG (76 aa)) are Cytoplasmic-facing.

Detected in the outer plexiform layer (OPL) of the retina, where it localizes to rod and cone ON-bipolar cells (at protein level). Also detected in bipolar cell bodies in the inner retinal layer (INL) (at protein level).

It localises to the cell projection. It is found in the dendrite. The protein resides in the perikaryon. The protein localises to the endoplasmic reticulum membrane. In terms of biological role, plays a role in the synapse formation and synaptic transmission between cone photoreceptor cells and retinal bipolar cells. Required for normal transmission of a light-evoked stimulus from the cone photoreceptor cells to the ON-bipolar cells and ON-ganglion cells in the inner retina. Required in retinal ON-bipolar cells for normal localization of the cation channel TRPM1 at dendrite tips. Seems to play a specific role in synaptic contacts made by ON-bipolar cells with cone photoreceptor pedicles. May also have a role in cone synapse formation. Might facilitate FGFR1 exit from the endoplasmic reticulum to the Golgi. Could be a regulator of the FGFRs. This is Leucine-rich repeat, immunoglobulin-like domain and transmembrane domain-containing protein 3 from Mus musculus (Mouse).